The following is a 216-amino-acid chain: Endoplasmic reticulum vesicle protein 25 (216 aa).

The first 25 residues, 1–25 (MGSSRLAMRSALGLFFLLFVQISLA), serve as a signal peptide directing secretion. Residues 26 to 185 (LKFDIAAGKG…TNESTNERVK (160 aa)) lie on the Lumenal side of the membrane. Positions 36–126 (ERCIRNFVLK…HRSIELDVDI (91 aa)) constitute a GOLD domain. A helical transmembrane segment spans residues 186 to 206 (WFAFGTMGMLVGLGVWQVIYL). The Cytoplasmic portion of the chain corresponds to 207 to 216 (RAYFRSKHLI).

This sequence belongs to the EMP24/GP25L family.

It localises to the endoplasmic reticulum membrane. Its subcellular location is the golgi apparatus membrane. Constituent of COPII-coated endoplasmic reticulum-derived transport vesicles. Required for efficient transport of a subset of secretory proteins to the Golgi. Facilitates retrograde transport from the Golgi to the endoplasmic reticulum. This is Endoplasmic reticulum vesicle protein 25 (erv25) from Emericella nidulans (strain FGSC A4 / ATCC 38163 / CBS 112.46 / NRRL 194 / M139) (Aspergillus nidulans).